The primary structure comprises 396 residues: MIQTKDIIELTDTYGANNYHPLPIVISKAEGVWVEDPEGNRYMDLLSAYSAVNQGHRHPKIINALIDQANRVTLTSRAFHSDQLGPWYEKVAKLTNKEMVLPMNTGAEAVETAIKTARRWAYDVKKVEANRAEIIVCEDNFHGRTMGAVSMSSNEEYKRGFGPMLPGIVVIPYGDLEALKAAITPNTAAFILEPIQGEAGINIPPAGFLKEALEVCKKENVLFVADEIQTGLGRTGKVFACDWDGVTPDMYILGKALGGGVFPISCVAANRDILGVFEPGSHGSTFGGNPLACAVSIAALEVLEEEKLTERSLQLGEKLVGQLKEIDNPMITEVRGKGLFIGIELNEPARPYCEQLKAAGLLCKETHENVIRIAPPLVISEEDLEWAFQKIKAVLS.

K255 bears the N6-(pyridoxal phosphate)lysine mark.

The protein belongs to the class-III pyridoxal-phosphate-dependent aminotransferase family. OAT subfamily. It depends on pyridoxal 5'-phosphate as a cofactor.

It is found in the cytoplasm. The enzyme catalyses a 2-oxocarboxylate + L-ornithine = L-glutamate 5-semialdehyde + an L-alpha-amino acid. The protein operates within amino-acid biosynthesis; L-proline biosynthesis; L-glutamate 5-semialdehyde from L-ornithine: step 1/1. Functionally, catalyzes the interconversion of ornithine to glutamate semialdehyde. The chain is Ornithine aminotransferase from Bacillus cereus (strain Q1).